Here is an 862-residue protein sequence, read N- to C-terminus: Protein SEY1 (862 aa).

Residues 1–743 lie on the Cytoplasmic side of the membrane; sequence MASNGHFSSV…KRSAIGGITQ (743 aa). Residues 48 to 301 enclose the GB1/RHD3-type G domain; the sequence is GFNYHLISVF…IPADGFAVYA (254 aa). 58-65 provides a ligand contact to GTP; sequence GSQSTGKS. A coiled-coil region spans residues 476–500; the sequence is SDYKQELSLFQKDLEKISSQLRKDE. The chain crosses the membrane as a helical span at residues 744-764; it reads VPLYFYGLLLALGWNEIIAVL. Over 765 to 767 the chain is Lumenal; that stretch reads RNP. The helical transmembrane segment at 768–788 threads the bilayer; the sequence is IYFIFLLLIGVGAYVTFRLNL. Over 789 to 862 the chain is Cytoplasmic; it reads WGPMINMAEA…TSDDDNDDDL (74 aa). The disordered stretch occupies residues 818–862; sequence SDSGRQAMAMSGRNARGTEEYEMSSNLKSKGRRTDTSDDDNDDDL.

The protein belongs to the TRAFAC class dynamin-like GTPase superfamily. GB1/RHD3 GTPase family. RHD3 subfamily.

It localises to the endoplasmic reticulum membrane. Cooperates with the reticulon proteins and tubule-shaping DP1 family proteins to generate and maintain the structure of the tubular endoplasmic reticulum network. Has GTPase activity, which is required for its function in ER organization. The sequence is that of Protein SEY1 from Arthroderma otae (strain ATCC MYA-4605 / CBS 113480) (Microsporum canis).